Reading from the N-terminus, the 1281-residue chain is Zinc finger transcription factor Trps1 (1281 aa).

A disordered region spans residues 1–198 (MVRKKNPPLR…VPSDGGVRLN (198 aa)). Lys-29 is covalently cross-linked (Glycyl lysine isopeptide (Lys-Gly) (interchain with G-Cter in SUMO2)). The segment covering 40 to 49 (DQMSENTDQS) has biased composition (polar residues). The segment covering 53–63 (ELNHKEEHSLH) has biased composition (basic and acidic residues). Residue Lys-76 forms a Glycyl lysine isopeptide (Lys-Gly) (interchain with G-Cter in SUMO2) linkage. A phosphoserine mark is found at Ser-90 and Ser-127. Over residues 148–162 (LETKEDQKMSPKATE) the composition is skewed to basic and acidic residues. Residues 163–189 (ETGQAQSGQANCQGLSPVSVASKNPQV) are compositionally biased toward polar residues. 2 positions are modified to phosphoserine: Ser-178 and Ser-216. Residues 222–247 (FKCNICGYGYYGNDPTDLIKHFRKYH) form a C2H2-type 1; atypical zinc finger. Lys-263 is covalently cross-linked (Glycyl lysine isopeptide (Lys-Gly) (interchain with G-Cter in SUMO2)). Residues 333 to 358 (FRCKFCNFTYMGNSSTELEQHFLQTH) form a C2H2-type 2; atypical zinc finger. A disordered region spans residues 365–394 (SLPSSEVAKPSEKNSNKSIPALQSSDSGDL). A compositionally biased stretch (polar residues) spans 380-391 (NKSIPALQSSDS). Residues Lys-418, Lys-457, Lys-474, and Lys-488 each participate in a glycyl lysine isopeptide (Lys-Gly) (interchain with G-Cter in SUMO2) cross-link. Residues 483 to 512 (QNDLAKSSEGETMTKTDKSSSGAKKKDFSS) are disordered. Over residues 488-512 (KSSEGETMTKTDKSSSGAKKKDFSS) the composition is skewed to basic and acidic residues. The segment at 614–637 (HQCHQCSFTTPDVDVLLFHYESVH) adopts a C2H2-type 3; atypical zinc-finger fold. Residues 635–819 (SVHESQASDV…SLGLLTPVSG (185 aa)) are mediates interaction with GLI3. Residue Lys-645 forms a Glycyl lysine isopeptide (Lys-Gly) (interchain with G-Cter in SUMO2) linkage. 2 C2H2-type zinc fingers span residues 666-689 (HSCT…RRAH) and 692-715 (YKCR…NTVH). Residue Lys-737 forms a Glycyl lysine isopeptide (Lys-Gly) (interchain with G-Cter in SUMO2) linkage. Thr-751 is subject to Phosphothreonine. A Glycyl lysine isopeptide (Lys-Gly) (interchain with G-Cter in SUMO2) cross-link involves residue Lys-755. Residue Lys-766 forms a Glycyl lysine isopeptide (Lys-Gly) (interchain with G-Cter in SUMO1); alternate linkage. Lys-766 participates in a covalent cross-link: Glycyl lysine isopeptide (Lys-Gly) (interchain with G-Cter in SUMO2); alternate. Glycyl lysine isopeptide (Lys-Gly) (interchain with G-Cter in SUMO2) cross-links involve residues Lys-825, Lys-850, Lys-877, and Lys-879. The segment at 856–887 (APAGGEKSGALPQQYPASGENKSKDESQSLLR) is disordered. Residues 896–920 (CANCLTTKTSLWRKNANGGYVCNAC) form a GATA-type zinc finger. Residues Lys-925, Lys-937, and Lys-965 each participate in a glycyl lysine isopeptide (Lys-Gly) (interchain with G-Cter in SUMO2) cross-link. Polar residues predominate over residues 961-977 (EQLNKQQRGSNEEQVNG). The tract at residues 961-1000 (EQLNKQQRGSNEEQVNGSPLERRSEDHLTESHQREIPLPS) is disordered. Phosphoserine is present on Ser-978. The span at 980 to 995 (LERRSEDHLTESHQRE) shows a compositional bias: basic and acidic residues. Residues 985 to 1184 (EDHLTESHQR…PTANGASKEK (200 aa)) are mediates interaction with RNF4. Glycyl lysine isopeptide (Lys-Gly) (interchain with G-Cter in SUMO2) cross-links involve residues Lys-1003, Lys-1012, Lys-1030, and Lys-1040. Residues 1039-1080 (IKSPQESTGDPGNSSSVSEGKGSSERGSPIEKYMRPAKHPNY) form a disordered region. The segment covering 1040-1049 (KSPQESTGDP) has biased composition (polar residues). The residue at position 1041 (Ser-1041) is a Phosphoserine. Over residues 1050–1059 (GNSSSVSEGK) the composition is skewed to low complexity. Basic and acidic residues predominate over residues 1060-1072 (GSSERGSPIEKYM). Ser-1066 is modified (phosphoserine). Lys-1070 participates in a covalent cross-link: Glycyl lysine isopeptide (Lys-Gly) (interchain with G-Cter in SUMO2). Ser-1085 carries the phosphoserine modification. Residues 1163 to 1281 (PLDLAIKHSR…QVEKNGKPKE (119 aa)) are transcriptional repressor domain. Positions 1168 to 1196 (IKHSRPGPTANGASKEKTKAPPNVKNEGP) are disordered. Residues Lys-1192 and Lys-1201 each participate in a glycyl lysine isopeptide (Lys-Gly) (interchain with G-Cter in SUMO2); alternate cross-link. Residues Lys-1192 and Lys-1201 each participate in a glycyl lysine isopeptide (Lys-Gly) (interchain with G-Cter in SUMO); alternate cross-link. A Glycyl lysine isopeptide (Lys-Gly) (interchain with G-Cter in SUMO1); alternate cross-link involves residue Lys-1201. 2 C2H2-type zinc fingers span residues 1215–1237 (TKCV…MSCH) and 1243–1267 (FQCS…RGLH).

In terms of assembly, interacts with RNF4; regulates TRPS1 repressor activity. Interacts specifically with the activator form of GLI3 (GLI3A) but not with the repressor form (GLI3R). Sumoylated. Sumoylation in the repressor domain inhibits the transcription repression activity. Sumoylation on Lys-1201 is the major site. Appears to be sumoylated on multiple sites. In terms of tissue distribution, ubiquitously expressed in the adult. Found in fetal brain, lung, kidney, liver, spleen and thymus. More highly expressed in androgen-dependent than in androgen-independent prostate cancer cells.

It localises to the nucleus. Transcriptional repressor. Binds specifically to GATA sequences and represses expression of GATA-regulated genes at selected sites and stages in vertebrate development. Regulates chondrocyte proliferation and differentiation. Executes multiple functions in proliferating chondrocytes, expanding the region of distal chondrocytes, activating proliferation in columnar cells and supporting the differentiation of columnar into hypertrophic chondrocytes. The sequence is that of Zinc finger transcription factor Trps1 (TRPS1) from Homo sapiens (Human).